We begin with the raw amino-acid sequence, 431 residues long: Divergent protein kinase domain 1B (431 aa).

The Cytoplasmic portion of the chain corresponds to 1-30 (MRRLRRLVHLVLLCPFSKGLQGRLPGLRVK). The short motif at 5–6 (RR) is the May mediate ER retention element. Residues 31–51 (YVLLVWLGIFVGSWMVYVHYS) form a helical membrane-spanning segment. The Lumenal segment spans residues 52 to 431 (SYSELCRGHV…WREISNTNYS (380 aa)). 2 cysteine pairs are disulfide-bonded: Cys-57–Cys-94 and Cys-62–Cys-117.

Belongs to the DIPK family. In terms of processing, among the many cysteines in the lumenal domain, most are probably involved in disulfide bonds.

Its subcellular location is the endoplasmic reticulum membrane. In Rattus norvegicus (Rat), this protein is Divergent protein kinase domain 1B.